The chain runs to 495 residues: MPLSLSNRDQNSGHLFYNRRLRAATTRFSVRMKHDDRKQTAALALSMVLVAIAAGWMMLLNVLKPTGIVGDSAIIGDRDSGALYARIDGRLYPALNLTSARLATGTAGQPTWVKPAEIAKYPTGPLVGIPGAPAAMPVNRGAVSAWAVCDTAGRPRSADKPVVTSIAGPITGGGRATHLRDDAGLLVTFDGSTYVIWGGKRSQIDPTNRAVTLSLGLDPGVTSPIQISRALFDGLPATEPLRVPAVPEAGTPSTWVPGARVGSVLQAQTAGGGSQFYVLLPDGVQKISSFVADLLRSANSYGAAAPRVVTPDVLVHTPQVTSLPVEYYPAGRLNFVDTAADPTTCVSWEKASTDPQARVAVYNGRGLPVPPSMDSRIVRLVRDDRAPASVVATQVLVLPGAANFVTSTSGVITAESRESLFWVSGNGVRFGIANDEATLRALGLDPGAAVQAPWPLLRTFAAGPALSRDAALLARDTVPTLGQVAIVTTTAKAGA.

A helical transmembrane segment spans residues 43-63 (LALSMVLVAIAAGWMMLLNVL).

It belongs to the EccB family. In terms of assembly, part of the ESX-2 / type VII secretion system (T7SS), which is composed of cytosolic and membrane components.

The protein localises to the cell membrane. An ATPase. The polypeptide is ESX-2 secretion system ATPase EccB2 (eccB2) (Mycobacterium tuberculosis (strain CDC 1551 / Oshkosh)).